Consider the following 59-residue polypeptide: Large ribosomal subunit protein bL32 (59 aa).

It belongs to the bacterial ribosomal protein bL32 family.

In Polynucleobacter necessarius subsp. necessarius (strain STIR1), this protein is Large ribosomal subunit protein bL32.